The chain runs to 597 residues: Elongation factor 4 (597 aa).

One can recognise a tr-type G domain in the interval 2 to 184 (KHIRNFSIIA…TIVKCIPAPE (183 aa)). GTP is bound by residues 14 to 19 (DHGKST) and 131 to 134 (NKID).

The protein belongs to the TRAFAC class translation factor GTPase superfamily. Classic translation factor GTPase family. LepA subfamily.

The protein resides in the cell inner membrane. It catalyses the reaction GTP + H2O = GDP + phosphate + H(+). Its function is as follows. Required for accurate and efficient protein synthesis under certain stress conditions. May act as a fidelity factor of the translation reaction, by catalyzing a one-codon backward translocation of tRNAs on improperly translocated ribosomes. Back-translocation proceeds from a post-translocation (POST) complex to a pre-translocation (PRE) complex, thus giving elongation factor G a second chance to translocate the tRNAs correctly. Binds to ribosomes in a GTP-dependent manner. This Aliivibrio salmonicida (strain LFI1238) (Vibrio salmonicida (strain LFI1238)) protein is Elongation factor 4.